The chain runs to 595 residues: Adenine deaminase 2 (595 aa).

It belongs to the metallo-dependent hydrolases superfamily. Adenine deaminase family. The cofactor is Mn(2+).

The catalysed reaction is adenine + H2O + H(+) = hypoxanthine + NH4(+). This Rhizobium johnstonii (strain DSM 114642 / LMG 32736 / 3841) (Rhizobium leguminosarum bv. viciae) protein is Adenine deaminase 2.